Reading from the N-terminus, the 254-residue chain is Ribonuclease HII (254 aa).

One can recognise an RNase H type-2 domain in the interval Ile-67 to Ile-254. Residues Asp-73, Glu-74, and Asp-170 each coordinate a divalent metal cation.

It belongs to the RNase HII family. Mn(2+) serves as cofactor. Mg(2+) is required as a cofactor.

It localises to the cytoplasm. The enzyme catalyses Endonucleolytic cleavage to 5'-phosphomonoester.. Its function is as follows. Endonuclease that specifically degrades the RNA of RNA-DNA hybrids. The sequence is that of Ribonuclease HII from Clostridium acetobutylicum (strain ATCC 824 / DSM 792 / JCM 1419 / IAM 19013 / LMG 5710 / NBRC 13948 / NRRL B-527 / VKM B-1787 / 2291 / W).